Reading from the N-terminus, the 535-residue chain is CTP synthase (535 aa).

The amidoligase domain stretch occupies residues 1 to 267 (MTKYIFVTGG…DQIVCDHLKL (267 aa)). Residue Ser-13 coordinates CTP. Ser-13 is a binding site for UTP. An ATP-binding site is contributed by 14 to 19 (SLGKGI). Position 54 (Tyr-54) interacts with L-glutamine. Asp-71 provides a ligand contact to ATP. 2 residues coordinate Mg(2+): Asp-71 and Glu-141. CTP contacts are provided by residues 148-150 (DIE), 188-193 (KTKPTQ), and Lys-224. UTP is bound by residues 188-193 (KTKPTQ) and Lys-224. 240-242 (RDA) contacts ATP. Positions 292–534 (KIALVGKYVE…VSASITNKES (243 aa)) constitute a Glutamine amidotransferase type-1 domain. Residue Gly-354 coordinates L-glutamine. Catalysis depends on Cys-381, which acts as the Nucleophile; for glutamine hydrolysis. L-glutamine-binding positions include 382-385 (LGMQ), Glu-405, and Arg-462. Catalysis depends on residues His-507 and Glu-509.

Belongs to the CTP synthase family. In terms of assembly, homotetramer.

The catalysed reaction is UTP + L-glutamine + ATP + H2O = CTP + L-glutamate + ADP + phosphate + 2 H(+). It carries out the reaction L-glutamine + H2O = L-glutamate + NH4(+). It catalyses the reaction UTP + NH4(+) + ATP = CTP + ADP + phosphate + 2 H(+). It participates in pyrimidine metabolism; CTP biosynthesis via de novo pathway; CTP from UDP: step 2/2. With respect to regulation, allosterically activated by GTP, when glutamine is the substrate; GTP has no effect on the reaction when ammonia is the substrate. The allosteric effector GTP functions by stabilizing the protein conformation that binds the tetrahedral intermediate(s) formed during glutamine hydrolysis. Inhibited by the product CTP, via allosteric rather than competitive inhibition. In terms of biological role, catalyzes the ATP-dependent amination of UTP to CTP with either L-glutamine or ammonia as the source of nitrogen. Regulates intracellular CTP levels through interactions with the four ribonucleotide triphosphates. The polypeptide is CTP synthase (Bacillus mycoides (strain KBAB4) (Bacillus weihenstephanensis)).